A 957-amino-acid chain; its full sequence is Mediator of RNA polymerase II transcription subunit 16 (957 aa).

The disordered stretch occupies residues 855-883 (YTEVDAAPSGKTNAQGPPQQPQPQQQRRR).

This sequence belongs to the Mediator complex subunit 16 family. Component of the Mediator complex.

The protein localises to the nucleus. In terms of biological role, component of the Mediator complex, a coactivator involved in the regulated transcription of nearly all RNA polymerase II-dependent genes. Mediator functions as a bridge to convey information from gene-specific regulatory proteins to the basal RNA polymerase II transcription machinery. Mediator is recruited to promoters by direct interactions with regulatory proteins and serves as a scaffold for the assembly of a functional preinitiation complex with RNA polymerase II and the general transcription factors. The protein is Mediator of RNA polymerase II transcription subunit 16 (sin4) of Aspergillus clavatus (strain ATCC 1007 / CBS 513.65 / DSM 816 / NCTC 3887 / NRRL 1 / QM 1276 / 107).